The chain runs to 280 residues: Phosphatidylglycerol--prolipoprotein diacylglyceryl transferase (280 aa).

Transmembrane regions (helical) follow at residues 59 to 79 and 97 to 117; these read FLTWATLGVVLGGRLGYILFY and GGMSFHGGALGVIVALALFTW. Arg142 provides a ligand contact to a 1,2-diacyl-sn-glycero-3-phospho-(1'-sn-glycerol). Helical transmembrane passes span 207–227 and 233–253; these read GFLAGLFLFGYAVARSICECF and FIGFLPFGTTMGQILCIPMAI.

Belongs to the Lgt family.

The protein localises to the cell inner membrane. It catalyses the reaction L-cysteinyl-[prolipoprotein] + a 1,2-diacyl-sn-glycero-3-phospho-(1'-sn-glycerol) = an S-1,2-diacyl-sn-glyceryl-L-cysteinyl-[prolipoprotein] + sn-glycerol 1-phosphate + H(+). It participates in protein modification; lipoprotein biosynthesis (diacylglyceryl transfer). Catalyzes the transfer of the diacylglyceryl group from phosphatidylglycerol to the sulfhydryl group of the N-terminal cysteine of a prolipoprotein, the first step in the formation of mature lipoproteins. This is Phosphatidylglycerol--prolipoprotein diacylglyceryl transferase from Gluconacetobacter diazotrophicus (strain ATCC 49037 / DSM 5601 / CCUG 37298 / CIP 103539 / LMG 7603 / PAl5).